The primary structure comprises 274 residues: NADPH-dependent 7-cyano-7-deazaguanine reductase (274 aa).

Residue 80-82 (VES) participates in substrate binding. 82–83 (SK) is a binding site for NADPH. The active-site Thioimide intermediate is the C181. D188 serves as the catalytic Proton donor. 220-221 (HE) is a binding site for substrate. 249–250 (RG) lines the NADPH pocket.

This sequence belongs to the GTP cyclohydrolase I family. QueF type 2 subfamily. In terms of assembly, homodimer.

It is found in the cytoplasm. The catalysed reaction is 7-aminomethyl-7-carbaguanine + 2 NADP(+) = 7-cyano-7-deazaguanine + 2 NADPH + 3 H(+). Its pathway is tRNA modification; tRNA-queuosine biosynthesis. Catalyzes the NADPH-dependent reduction of 7-cyano-7-deazaguanine (preQ0) to 7-aminomethyl-7-deazaguanine (preQ1). The sequence is that of NADPH-dependent 7-cyano-7-deazaguanine reductase from Burkholderia vietnamiensis (strain G4 / LMG 22486) (Burkholderia cepacia (strain R1808)).